The chain runs to 283 residues: Bifunctional protein FolD (283 aa).

Residues 157-159 (GNG) and isoleucine 224 each bind NADP(+).

This sequence belongs to the tetrahydrofolate dehydrogenase/cyclohydrolase family. In terms of assembly, homodimer.

It carries out the reaction (6R)-5,10-methylene-5,6,7,8-tetrahydrofolate + NADP(+) = (6R)-5,10-methenyltetrahydrofolate + NADPH. The enzyme catalyses (6R)-5,10-methenyltetrahydrofolate + H2O = (6R)-10-formyltetrahydrofolate + H(+). Its pathway is one-carbon metabolism; tetrahydrofolate interconversion. Its function is as follows. Catalyzes the oxidation of 5,10-methylenetetrahydrofolate to 5,10-methenyltetrahydrofolate and then the hydrolysis of 5,10-methenyltetrahydrofolate to 10-formyltetrahydrofolate. The sequence is that of Bifunctional protein FolD from Mycoplasmoides gallisepticum (strain R(low / passage 15 / clone 2)) (Mycoplasma gallisepticum).